The chain runs to 347 residues: S-adenosylmethionine:tRNA ribosyltransferase-isomerase (347 aa).

This sequence belongs to the QueA family. As to quaternary structure, monomer.

The protein resides in the cytoplasm. The enzyme catalyses 7-aminomethyl-7-carbaguanosine(34) in tRNA + S-adenosyl-L-methionine = epoxyqueuosine(34) in tRNA + adenine + L-methionine + 2 H(+). Its pathway is tRNA modification; tRNA-queuosine biosynthesis. Functionally, transfers and isomerizes the ribose moiety from AdoMet to the 7-aminomethyl group of 7-deazaguanine (preQ1-tRNA) to give epoxyqueuosine (oQ-tRNA). This chain is S-adenosylmethionine:tRNA ribosyltransferase-isomerase, found in Treponema denticola (strain ATCC 35405 / DSM 14222 / CIP 103919 / JCM 8153 / KCTC 15104).